The sequence spans 301 residues: Sulfate adenylyltransferase subunit 2 (301 aa).

Positions 278 to 301 are disordered; that stretch reads ERQGRLIDGDEPASMERKKREGYF.

This sequence belongs to the PAPS reductase family. CysD subfamily. Sulfate-activating enzymes, NodP and NodQ, may be physically associated.

It catalyses the reaction sulfate + ATP + H(+) = adenosine 5'-phosphosulfate + diphosphate. Functionally, proposed to provide activated sulfate for transfer to nod factor. In Azospirillum brasilense, this protein is Sulfate adenylyltransferase subunit 2 (nodP).